Reading from the N-terminus, the 853-residue chain is Aryl hydrocarbon receptor (853 aa).

A propeptide spanning residues 1–9 (MSSGANITY) is cleaved from the precursor. Positions 1–38 (MSSGANITYASRKRRKPVQKTVKPVPAEGIKSNPSKRH) are disordered. 2 consecutive short sequence motifs (nuclear localization signal) follow at residues 12–15 (RKRR) and 36–41 (KRHRDR). The bHLH domain maps to 26–79 (PAEGIKSNPSKRHRDRLNTELDRLASLLPFPQDVINKLDKLSVLRLSVSYLRAK). The segment at 37-65 (RHRDRLNTELDRLASLLPFPQDVINKLDK) is DNA-binding. Required for maintaining the overall integrity of the AHR:ARNT heterodimer and its transcriptional activity stretches follow at residues 49–81 (LASL…AKSF), 116–124 (LLQALNGFV), and 264–266 (FAI). The short motif at 63–71 (LDKLSVLRL) is the Nuclear export signal element. One can recognise a PAS 1 domain in the interval 116–179 (LLQALNGFVL…RQLHWALNPS (64 aa)). In terms of domain architecture, PAS 2 spans 273–340 (PSILEIRTKN…CAESHIRMIK (68 aa)). Positions 346–384 (MTVFRLLAKHSRWRWVQSNARLIYRNGRPDYIIATQRPL) constitute a PAC domain. Residues 429–451 (TKSNTSRKDWAPQSTPSKDSFHP) are disordered. Positions 440-451 (PQSTPSKDSFHP) are enriched in polar residues.

As to quaternary structure, homodimer. Heterodimer; efficient DNA binding requires dimerization with another bHLH protein. Interacts with ARNT; the heterodimer ARNT:AHR binds to core DNA sequence 5'-TGCGTG-3' within the dioxin response element (DRE) of target gene promoters and activates their transcription. Binds MYBBP1A. Interacts with coactivators including SRC-1, RIP140 and NOCA7, and with the corepressor SMRT. Interacts with NEDD8 and IVNS1ABP. Interacts with BMAL1. Interacts with HSP90AB1. Interacts with TIPARP; leading to mono-ADP-ribosylation of AHR and subsequent inhibition of AHR. Mono-ADP-ribosylated, leading to inhibit transcription activator activity of AHR. As to expression, expressed in all tissues tested including brain, heart, kidney, liver, lung, spleen, skeletal muscle and thymus.

The protein localises to the cytoplasm. Its subcellular location is the nucleus. In terms of biological role, ligand-activated transcription factor that enables cells to adapt to changing conditions by sensing compounds from the environment, diet, microbiome and cellular metabolism, and which plays important roles in development, immunity and cancer. Upon ligand binding, translocates into the nucleus, where it heterodimerizes with ARNT and induces transcription by binding to xenobiotic response elements (XRE). Regulates a variety of biological processes, including angiogenesis, hematopoiesis, drug and lipid metabolism, cell motility and immune modulation. Xenobiotics can act as ligands: upon xenobiotic-binding, activates the expression of multiple phase I and II xenobiotic chemical metabolizing enzyme genes (such as the CYP1A1 gene). Mediates biochemical and toxic effects of halogenated aromatic hydrocarbons. Next to xenobiotics, natural ligands derived from plants, microbiota, and endogenous metabolism are potent AHR agonists. Tryptophan (Trp) derivatives constitute an important class of endogenous AHR ligands. Acts as a negative regulator of anti-tumor immunity: indoles and kynurenic acid generated by Trp catabolism act as ligand and activate AHR, thereby promoting AHR-driven cancer cell motility and suppressing adaptive immunity. Regulates the circadian clock by inhibiting the basal and circadian expression of the core circadian component PER1. Inhibits PER1 by repressing the CLOCK-BMAL1 heterodimer mediated transcriptional activation of PER1. The heterodimer ARNT:AHR binds to core DNA sequence 5'-TGCGTG-3' within the dioxin response element (DRE) of target gene promoters and activates their transcription. The polypeptide is Aryl hydrocarbon receptor (Ahr) (Rattus norvegicus (Rat)).